Consider the following 317-residue polypeptide: Mitochondrial thiamine pyrophosphate carrier 1 (317 aa).

Transmembrane regions (helical) follow at residues 15–37 (TVSWYNSVIAGSVSGVFARMATA), 80–100 (IPATAMYVVYGAVQFGSYSWF), 118–138 (LTVGALAGMTSSVVSYPLDLL), 168–190 (GFFTGISTAMTTVTLSTAIMFLT), 205–227 (FWSRPVSASSGIIAGFVSKTMVF), and 281–300 (GLTMGLCKSVPTTAISLFVY). 3 Solcar repeats span residues 16–103 (VSWY…FNNV), 112–197 (SQQG…VNIV), and 206–306 (WSRP…TMDL).

It belongs to the mitochondrial carrier (TC 2.A.29) family.

The protein resides in the mitochondrion inner membrane. Its function is as follows. Mitochondrial transporter that mediates uptake of thiamine pyrophosphate (ThPP) into mitochondria. In Kluyveromyces lactis (strain ATCC 8585 / CBS 2359 / DSM 70799 / NBRC 1267 / NRRL Y-1140 / WM37) (Yeast), this protein is Mitochondrial thiamine pyrophosphate carrier 1 (TPC1).